Reading from the N-terminus, the 398-residue chain is Argininosuccinate synthase (398 aa).

ATP is bound by residues 9-17 and Ala-37; that span reads AYSGGVDTS. Residue Tyr-88 participates in L-citrulline binding. Gly-118 serves as a coordination point for ATP. L-aspartate-binding residues include Thr-120, Asn-124, and Asp-125. Residue Asn-124 participates in L-citrulline binding. L-citrulline-binding residues include Arg-128, Ser-176, Ser-185, Glu-261, and Tyr-273.

It belongs to the argininosuccinate synthase family. Type 1 subfamily. Homotetramer.

It is found in the cytoplasm. It carries out the reaction L-citrulline + L-aspartate + ATP = 2-(N(omega)-L-arginino)succinate + AMP + diphosphate + H(+). It participates in amino-acid biosynthesis; L-arginine biosynthesis; L-arginine from L-ornithine and carbamoyl phosphate: step 2/3. The sequence is that of Argininosuccinate synthase from Gloeobacter violaceus (strain ATCC 29082 / PCC 7421).